Here is a 105-residue protein sequence, read N- to C-terminus: RxLR effector protein PITG_18670 (105 aa).

Positions 1-21 are cleaved as a signal peptide; it reads MRSIFYFALAFAALTCSNASA. Positions 39–57 match the RxLR-dEER motif; sequence RSLRVAGQEVARGDRGEEI.

Belongs to the RxLR effector family.

The protein resides in the secreted. It localises to the host nucleus. Its subcellular location is the host nucleolus. The protein localises to the host cytoplasm. Functionally, effector that enhances P.infestans colonization of Nicotiana benthamiana leaves. The polypeptide is RxLR effector protein PITG_18670 (Phytophthora infestans (strain T30-4) (Potato late blight agent)).